Reading from the N-terminus, the 281-residue chain is Insecticidal crystal toxin protein (281 aa).

Antigenic epitope stretches follow at residues 54 to 78 (NYSH…VYTF), 91 to 104 (IYTH…AVKA), 108 to 116 (GTASKVVQG), 131 to 148 (FKIT…FIRI), 160 to 172 (AVIN…VAEL), 189 to 196 (KYKDFQYL), 208 to 216 (QNISLVFNR), 221 to 236 (TNTT…LPIT), and 247 to 256 (KLETVQQIIN).

This sequence belongs to the delta endotoxin family.

Its function is as follows. Promotes colloidosmotic lysis by binding to the midgut epithelial cells of insects. Active against Mamestra brassicae. The polypeptide is Insecticidal crystal toxin protein (Bacillus thuringiensis subsp. kurstaki).